We begin with the raw amino-acid sequence, 953 residues long: Translation initiation factor IF-2 (953 aa).

Disordered regions lie at residues 51 to 242 and 279 to 363; these read SKAS…QEAK and TKLK…TERK. Composition is skewed to basic and acidic residues over residues 80-89 and 98-111; these read TGSEHVEKTQ and FKAE…EQAA. Polar residues predominate over residues 131–140; the sequence is QPNNHQTNEQ. Residues 149-188 show a composition bias toward basic and acidic residues; it reads SQGDTNDKRIERKASNVSPRHDNHQLVGDRNRSFAKENHK. Residues 191–207 show a composition bias toward polar residues; sequence RFTNQKKQGRQEPQSKS. The span at 229–242 shows a compositional bias: basic and acidic residues; that stretch reads RQSETRFRAQQEAK. The segment covering 282 to 291 has biased composition (polar residues); the sequence is KSSNISAKST. The segment covering 300–317 has biased composition (basic and acidic residues); that stretch reads ARPEKNRELTHHSQEGQK. The span at 322–338 shows a compositional bias: low complexity; sequence SWNSQNQVRNQKNSNWN. Residues 339–348 show a composition bias toward basic residues; sequence KNKKTKKGKN. The 170-residue stretch at 454–623 folds into the tr-type G domain; sequence ERAPVVTIMG…LLVAEVEELK (170 aa). A G1 region spans residues 463 to 470; that stretch reads GHVDHGKT. 463-470 contacts GTP; the sequence is GHVDHGKT. Positions 488-492 are G2; that stretch reads GITQH. The interval 509-512 is G3; sequence DTPG. GTP contacts are provided by residues 509–513 and 563–566; these read DTPGH and NKID. The interval 563 to 566 is G4; sequence NKID. The interval 599–601 is G5; it reads SAK.

The protein belongs to the TRAFAC class translation factor GTPase superfamily. Classic translation factor GTPase family. IF-2 subfamily.

It is found in the cytoplasm. Functionally, one of the essential components for the initiation of protein synthesis. Protects formylmethionyl-tRNA from spontaneous hydrolysis and promotes its binding to the 30S ribosomal subunits. Also involved in the hydrolysis of GTP during the formation of the 70S ribosomal complex. The chain is Translation initiation factor IF-2 from Streptococcus pyogenes serotype M49 (strain NZ131).